Reading from the N-terminus, the 101-residue chain is Large ribosomal subunit protein bL21 (101 aa).

Belongs to the bacterial ribosomal protein bL21 family. In terms of assembly, part of the 50S ribosomal subunit. Contacts protein L20.

Its function is as follows. This protein binds to 23S rRNA in the presence of protein L20. This chain is Large ribosomal subunit protein bL21, found in Sulfurovum sp. (strain NBC37-1).